The chain runs to 70 residues: Omega-conotoxin-like Bu1 (70 aa).

The first 22 residues, 1 to 22 (MKLTCVAIVAVLLLTACQLITA), serve as a signal peptide directing secretion. The propeptide occupies 23-45 (EDSRGTQLHRALRKTTKLSVSTR). Intrachain disulfides connect C46–C61, C53–C65, and C60–C70.

Belongs to the conotoxin O1 superfamily. In terms of tissue distribution, expressed by the venom duct.

It is found in the secreted. Its function is as follows. Omega-conotoxins act at presynaptic membranes, they bind and block voltage-gated calcium channels (Cav). This chain is Omega-conotoxin-like Bu1, found in Conus bullatus (Bubble cone).